The sequence spans 409 residues: Arginine deiminase (409 aa).

Residue Cys-399 is the Amidino-cysteine intermediate of the active site.

This sequence belongs to the arginine deiminase family.

It is found in the cytoplasm. It catalyses the reaction L-arginine + H2O = L-citrulline + NH4(+). It participates in amino-acid degradation; L-arginine degradation via ADI pathway; carbamoyl phosphate from L-arginine: step 1/2. The protein is Arginine deiminase of Borrelia duttonii (strain Ly).